The following is a 354-amino-acid chain: Methionine import ATP-binding protein MetN (354 aa).

An ABC transporter domain is found at 8–250 (LDHIDITFHQ…PKEALTQEFI (243 aa)). 42 to 49 (GYSGAGKS) contacts ATP.

It belongs to the ABC transporter superfamily. Methionine importer (TC 3.A.1.24) family. As to quaternary structure, the complex is composed of two ATP-binding proteins (MetN), two transmembrane proteins (MetI) and a solute-binding protein (MetQ).

It is found in the cell membrane. The enzyme catalyses L-methionine(out) + ATP + H2O = L-methionine(in) + ADP + phosphate + H(+). The catalysed reaction is D-methionine(out) + ATP + H2O = D-methionine(in) + ADP + phosphate + H(+). Its function is as follows. Part of the ABC transporter complex MetNIQ involved in methionine import. Responsible for energy coupling to the transport system. The protein is Methionine import ATP-binding protein MetN of Streptococcus pyogenes serotype M4 (strain MGAS10750).